A 72-amino-acid polypeptide reads, in one-letter code: Translation initiation factor IF-1 (72 aa).

The S1-like domain occupies 1-72 (MSKQDVIEVE…TRGRIVYRYK (72 aa)).

It belongs to the IF-1 family. As to quaternary structure, component of the 30S ribosomal translation pre-initiation complex which assembles on the 30S ribosome in the order IF-2 and IF-3, IF-1 and N-formylmethionyl-tRNA(fMet); mRNA recruitment can occur at any time during PIC assembly.

The protein localises to the cytoplasm. Its function is as follows. One of the essential components for the initiation of protein synthesis. Stabilizes the binding of IF-2 and IF-3 on the 30S subunit to which N-formylmethionyl-tRNA(fMet) subsequently binds. Helps modulate mRNA selection, yielding the 30S pre-initiation complex (PIC). Upon addition of the 50S ribosomal subunit IF-1, IF-2 and IF-3 are released leaving the mature 70S translation initiation complex. In Pelotomaculum thermopropionicum (strain DSM 13744 / JCM 10971 / SI), this protein is Translation initiation factor IF-1.